The primary structure comprises 254 residues: 3-deoxy-manno-octulosonate cytidylyltransferase (254 aa).

Belongs to the KdsB family.

It is found in the cytoplasm. It catalyses the reaction 3-deoxy-alpha-D-manno-oct-2-ulosonate + CTP = CMP-3-deoxy-beta-D-manno-octulosonate + diphosphate. Its pathway is nucleotide-sugar biosynthesis; CMP-3-deoxy-D-manno-octulosonate biosynthesis; CMP-3-deoxy-D-manno-octulosonate from 3-deoxy-D-manno-octulosonate and CTP: step 1/1. It functions in the pathway bacterial outer membrane biogenesis; lipopolysaccharide biosynthesis. Functionally, activates KDO (a required 8-carbon sugar) for incorporation into bacterial lipopolysaccharide in Gram-negative bacteria. The sequence is that of 3-deoxy-manno-octulosonate cytidylyltransferase from Bordetella parapertussis (strain 12822 / ATCC BAA-587 / NCTC 13253).